A 409-amino-acid chain; its full sequence is Torsin-4A (409 aa).

Residues 1–16 show a composition bias toward basic and acidic residues; sequence MGEQDPSDRLRGDQLK. 2 disordered regions span residues 1 to 28 and 75 to 99; these read MGEQDPSDRLRGDQLKEPNQNGKGSFSQ and DNLHEPVNSNPASPRKRKKKRKGRV. Polar residues predominate over residues 17 to 28; sequence EPNQNGKGSFSQ. Residues 88-98 show a composition bias toward basic residues; it reads PRKRKKKRKGR. A helical transmembrane segment spans residues 120–136; the sequence is CLYLLCIIVFLQVYNAI. 192 to 199 contacts ATP; that stretch reads GPTGVGKS.

The protein belongs to the ClpA/ClpB family. Torsin subfamily.

The protein localises to the membrane. The chain is Torsin-4A (tor4a) from Danio rerio (Zebrafish).